A 543-amino-acid chain; its full sequence is Excitatory amino acid transporter 1 (543 aa).

Residues 1–47 (MTKSNGEEPRMGGRMERLQQGVRKRTLLAKKKVQSLTKEDVKSYLFR) lie on the Cytoplasmic side of the membrane. Residues 48–68 (NAFVLLTVTAVIVGTILGFAL) traverse the membrane as a helical segment. The Extracellular segment spans residues 69–86 (RPYKMSYREVKYFSFPGE). Residues 87–108 (LLMRMLQMLVLPLIISSLVTGM) form a helical membrane-spanning segment. Topologically, residues 109 to 122 (AALDSKASGKMGMR) are cytoplasmic. Residues 123 to 145 (AVVYYMTTTIIAVVIGIIIVIII) traverse the membrane as a helical segment. Residues 146 to 236 (HPGKGTKENM…IREEMVPVPG (91 aa)) are Extracellular-facing. Asn206 and Asn216 each carry an N-linked (GlcNAc...) asparagine glycan. Residues 237 to 260 (SVNGVNALGLVVFSMCFGFVIGNM) traverse the membrane as a helical segment. Over 261–269 (KEQGQALRE) the chain is Cytoplasmic. A helical membrane pass occupies residues 270-297 (FFDSLNEAIMRLVAVIMWYAPLGILFLI). Over 298–318 (AGKIVEMEDMGVIGGQLAMYT) the chain is Extracellular. Residues 319–340 (VTVIVGLLIHAVIVLPLLYFLV) form a helical membrane-spanning segment. Over 341 to 345 (TRKNP) the chain is Cytoplasmic. The discontinuously helical intramembrane region spans 346–376 (WVFIGGLLQALITALGTSSSSATLPITFKCL). 363–365 (SSS) is a binding site for L-aspartate. Over 377 to 385 (EENNGVDKR) the chain is Cytoplasmic. The chain crosses the membrane as a helical span at residues 386–412 (ITRFVLPVGATINMDGTALYEALAAIF). Na(+) is bound by residues Gly394, Thr396, and Asn398. Residue Thr402 coordinates L-aspartate. The Extracellular segment spans residues 413–425 (IAQVNNFDLNFGQ). Positions 426–459 (IITISITATAASIGAAGIPQAGLVTMVIVLTSVG) form an intramembrane region, discontinuously helical. Position 443–447 (443–447 (IPQAG)) interacts with L-aspartate. At 460 to 472 (LPTDDITLIIAVD) the chain is on the extracellular side. A helical membrane pass occupies residues 473–494 (WFLDRLRTTTNVLGDSLGAGIV). Asp476 and Asn483 together coordinate L-aspartate. Na(+) contacts are provided by Asn483 and Asp487. Topologically, residues 495–543 (EHLSRHELKNRDVEMGNSVIEENEMKKPYQLIAQDNEPEKPVADSETKM) are cytoplasmic. Ser512 is subject to Phosphoserine. Residues 522–543 (PYQLIAQDNEPEKPVADSETKM) are disordered. The segment covering 531 to 543 (EPEKPVADSETKM) has biased composition (basic and acidic residues).

Belongs to the dicarboxylate/amino acid:cation symporter (DAACS) (TC 2.A.23) family. SLC1A3 subfamily. Homotrimer. Post-translationally, glycosylated. Detected in brain, in Bergmann glia arborising into the molecular layer of the cerebellum (at protein level). Localized in brain and is highly enriched in the Purkinje cell layer in cerebellum. Intermediate level in lung, low level in spleen, skeletal muscle and testis.

The protein resides in the cell membrane. It catalyses the reaction K(+)(in) + L-glutamate(out) + 3 Na(+)(out) + H(+)(out) = K(+)(out) + L-glutamate(in) + 3 Na(+)(in) + H(+)(in). The catalysed reaction is K(+)(in) + L-aspartate(out) + 3 Na(+)(out) + H(+)(out) = K(+)(out) + L-aspartate(in) + 3 Na(+)(in) + H(+)(in). It carries out the reaction D-aspartate(out) + K(+)(in) + 3 Na(+)(out) + H(+)(out) = D-aspartate(in) + K(+)(out) + 3 Na(+)(in) + H(+)(in). Sodium-dependent, high-affinity amino acid transporter that mediates the uptake of L-glutamate and also L-aspartate and D-aspartate. Functions as a symporter that transports one amino acid molecule together with two or three Na(+) ions and one proton, in parallel with the counter-transport of one K(+) ion. Plays a redundant role in the rapid removal of released glutamate from the synaptic cleft, which is essential for terminating the postsynaptic action of glutamate. This Mus musculus (Mouse) protein is Excitatory amino acid transporter 1 (Slc1a3).